The primary structure comprises 450 residues: tRNA modification GTPase MnmE (450 aa).

Arg-23, Glu-79, and Lys-118 together coordinate (6S)-5-formyl-5,6,7,8-tetrahydrofolate. One can recognise a TrmE-type G domain in the interval 214 to 374 (GITLILVGKP…LKEHILNKVG (161 aa)). K(+) is bound at residue Asn-224. GTP contacts are provided by residues 224-229 (NAGKSS), 243-249 (TSIAGTT), and 268-271 (DTAG). Ser-228 contributes to the Mg(2+) binding site. Residues Thr-243, Ile-245, and Thr-248 each coordinate K(+). A Mg(2+)-binding site is contributed by Thr-249. Lys-450 contributes to the (6S)-5-formyl-5,6,7,8-tetrahydrofolate binding site.

This sequence belongs to the TRAFAC class TrmE-Era-EngA-EngB-Septin-like GTPase superfamily. TrmE GTPase family. In terms of assembly, homodimer. Heterotetramer of two MnmE and two MnmG subunits. K(+) serves as cofactor.

The protein resides in the cytoplasm. Its function is as follows. Exhibits a very high intrinsic GTPase hydrolysis rate. Involved in the addition of a carboxymethylaminomethyl (cmnm) group at the wobble position (U34) of certain tRNAs, forming tRNA-cmnm(5)s(2)U34. This Francisella tularensis subsp. tularensis (strain FSC 198) protein is tRNA modification GTPase MnmE.